Consider the following 332-residue polypeptide: Lipoyl synthase (332 aa).

Residues Cys79, Cys84, Cys90, Cys105, Cys109, Cys112, and Ser319 each contribute to the [4Fe-4S] cluster site. The Radical SAM core domain occupies 91–308 (FSHGTATFMI…ADYGYEIGFK (218 aa)).

Belongs to the radical SAM superfamily. Lipoyl synthase family. [4Fe-4S] cluster serves as cofactor.

It is found in the cytoplasm. The catalysed reaction is [[Fe-S] cluster scaffold protein carrying a second [4Fe-4S](2+) cluster] + N(6)-octanoyl-L-lysyl-[protein] + 2 oxidized [2Fe-2S]-[ferredoxin] + 2 S-adenosyl-L-methionine + 4 H(+) = [[Fe-S] cluster scaffold protein] + N(6)-[(R)-dihydrolipoyl]-L-lysyl-[protein] + 4 Fe(3+) + 2 hydrogen sulfide + 2 5'-deoxyadenosine + 2 L-methionine + 2 reduced [2Fe-2S]-[ferredoxin]. The protein operates within protein modification; protein lipoylation via endogenous pathway; protein N(6)-(lipoyl)lysine from octanoyl-[acyl-carrier-protein]: step 2/2. Its function is as follows. Catalyzes the radical-mediated insertion of two sulfur atoms into the C-6 and C-8 positions of the octanoyl moiety bound to the lipoyl domains of lipoate-dependent enzymes, thereby converting the octanoylated domains into lipoylated derivatives. This is Lipoyl synthase from Hahella chejuensis (strain KCTC 2396).